The chain runs to 37 residues: Large ribosomal subunit protein bL36 (37 aa).

The protein belongs to the bacterial ribosomal protein bL36 family.

This chain is Large ribosomal subunit protein bL36, found in Caldanaerobacter subterraneus subsp. tengcongensis (strain DSM 15242 / JCM 11007 / NBRC 100824 / MB4) (Thermoanaerobacter tengcongensis).